The chain runs to 472 residues: Adenosylhomocysteinase (472 aa).

Threonine 64, aspartate 138, and glutamate 198 together coordinate substrate. An NAD(+)-binding site is contributed by 199 to 201 (TTT). The substrate site is built by lysine 228 and aspartate 232. Residues asparagine 233, 262–267 (GFGDVG), glutamate 285, asparagine 320, 341–343 (IGH), and asparagine 386 each bind NAD(+).

The protein belongs to the adenosylhomocysteinase family. The cofactor is NAD(+).

It localises to the cytoplasm. It catalyses the reaction S-adenosyl-L-homocysteine + H2O = L-homocysteine + adenosine. It participates in amino-acid biosynthesis; L-homocysteine biosynthesis; L-homocysteine from S-adenosyl-L-homocysteine: step 1/1. May play a key role in the regulation of the intracellular concentration of adenosylhomocysteine. This chain is Adenosylhomocysteinase, found in Prochlorococcus marinus subsp. pastoris (strain CCMP1986 / NIES-2087 / MED4).